The primary structure comprises 417 residues: Serine hydroxymethyltransferase (417 aa).

Residues L121 and 125–127 (GHL) each bind (6S)-5,6,7,8-tetrahydrofolate. K229 bears the N6-(pyridoxal phosphate)lysine mark. 355-357 (SPF) serves as a coordination point for (6S)-5,6,7,8-tetrahydrofolate.

Belongs to the SHMT family. Homodimer. Requires pyridoxal 5'-phosphate as cofactor.

The protein localises to the cytoplasm. It catalyses the reaction (6R)-5,10-methylene-5,6,7,8-tetrahydrofolate + glycine + H2O = (6S)-5,6,7,8-tetrahydrofolate + L-serine. It participates in one-carbon metabolism; tetrahydrofolate interconversion. Its pathway is amino-acid biosynthesis; glycine biosynthesis; glycine from L-serine: step 1/1. In terms of biological role, catalyzes the reversible interconversion of serine and glycine with tetrahydrofolate (THF) serving as the one-carbon carrier. This reaction serves as the major source of one-carbon groups required for the biosynthesis of purines, thymidylate, methionine, and other important biomolecules. Also exhibits THF-independent aldolase activity toward beta-hydroxyamino acids, producing glycine and aldehydes, via a retro-aldol mechanism. The chain is Serine hydroxymethyltransferase from Shewanella oneidensis (strain ATCC 700550 / JCM 31522 / CIP 106686 / LMG 19005 / NCIMB 14063 / MR-1).